Here is a 1288-residue protein sequence, read N- to C-terminus: (E3-independent) E2 ubiquitin-conjugating enzyme UBE2O (1288 aa).

2 stretches are compositionally biased toward low complexity: residues 1 to 26 (MADP…APAA) and 34 to 47 (ATDS…DSGP). Disordered stretches follow at residues 1–51 (MADP…EAGS) and 80–109 (EDSD…EGRA). Ser-45, Ser-82, Ser-84, and Ser-394 each carry phosphoserine. Disordered stretches follow at residues 396-529 (TPDT…KNKV) and 711-743 (ESDY…NGLV). The span at 401-418 (CPRDHSMEDPDKKGEARA) shows a compositional bias: basic and acidic residues. Phosphoserine is present on Ser-436. Positions 440–450 (MQDEGSEELQE) are enriched in acidic residues. Residues 462-472 (EGGDDGLHSAE) show a composition bias toward basic and acidic residues. Residues 473 to 485 (QDADDEAADDTDD) show a composition bias toward acidic residues. Thr-483 and Thr-486 each carry phosphothreonine. Over residues 486–502 (TSSVTSSASSTTSSQSG) the composition is skewed to low complexity. Phosphoserine is present on Ser-510. Residues 517-528 (NLKRKHKRKKNK) show a composition bias toward basic residues. A compositionally biased stretch (low complexity) spans 717-726 (VEGSSSGASS). A compositionally biased stretch (acidic residues) spans 727–737 (DEWEDDSDSWE). A coiled-coil region spans residues 809 to 879 (RELKEAIKIL…IAEEEKMEAV (71 aa)). The residue at position 833 (Ser-833) is a Phosphoserine. Thr-835 carries the phosphothreonine modification. The residue at position 836 (Ser-836) is a Phosphoserine. Residues 872 to 890 (EEEKMEAVPDTERKEEKPE) are compositionally biased toward basic and acidic residues. Residues 872–899 (EEEKMEAVPDTERKEEKPEVQSPVKAEW) are disordered. A Phosphoserine modification is found at Ser-893. One can recognise a UBC core domain in the interval 950 to 1110 (KFFSTVRKEM…ALIRVVQSMT (161 aa)). Cys-1037 serves as the catalytic Glycyl thioester intermediate. The disordered stretch occupies residues 1158 to 1247 (GALKDSSSLE…RSFLPEKSGY (90 aa)).

This sequence belongs to the ubiquitin-conjugating enzyme family. As to quaternary structure, interacts with CPNE1 (via VWFA domain) and CPNE4 (via VWFA domain). Interacts with UBR2. Post-translationally, phosphorylated. Phosphorylation affects subcellular location. Ubiquitinated: autoubiquitinates, possibly affecting its subcellular location. In terms of tissue distribution, highly expressed in reticulocytes.

The protein localises to the cytoplasm. It is found in the nucleus. The catalysed reaction is S-ubiquitinyl-[E1 ubiquitin-activating enzyme]-L-cysteine + [acceptor protein]-L-lysine = [E1 ubiquitin-activating enzyme]-L-cysteine + N(6)-monoubiquitinyl-[acceptor protein]-L-lysine.. The protein operates within protein modification; protein ubiquitination. Inhibited by inorganic arsenite such as phenylarsenoxides. Its function is as follows. E2/E3 hybrid ubiquitin-protein ligase that displays both E2 and E3 ligase activities and mediates monoubiquitination of target proteins. Negatively regulates TRAF6-mediated NF-kappa-B activation independently of its E2 activity. Acts as a positive regulator of BMP7 signaling by mediating monoubiquitination of SMAD6, thereby regulating adipogenesis. Mediates monoubiquitination at different sites of the nuclear localization signal (NLS) of BAP1, leading to cytoplasmic retention of BAP1. Also able to monoubiquitinate the NLS of other chromatin-associated proteins, such as INO80 and CXXC1, affecting their subcellular location. Acts as a regulator of retrograde transport by assisting the TRIM27:MAGEL2 E3 ubiquitin ligase complex to mediate 'Lys-63'-linked ubiquitination of WASHC1, leading to promote endosomal F-actin assembly. This Mus musculus (Mouse) protein is (E3-independent) E2 ubiquitin-conjugating enzyme UBE2O (Ube2o).